The chain runs to 674 residues: DNA ligase (674 aa).

Residues 34–38, 84–85, and Glu-116 contribute to the NAD(+) site; these read DAEYD and SL. Residue Lys-118 is the N6-AMP-lysine intermediate of the active site. NAD(+) contacts are provided by Arg-139, Glu-174, Lys-291, and Lys-315. Residues Cys-409, Cys-412, Cys-425, and Cys-430 each coordinate Zn(2+). The BRCT domain maps to 586-674; sequence RGEEALKGLT…TGKPVETLAS (89 aa).

Belongs to the NAD-dependent DNA ligase family. LigA subfamily. It depends on Mg(2+) as a cofactor. The cofactor is Mn(2+).

It catalyses the reaction NAD(+) + (deoxyribonucleotide)n-3'-hydroxyl + 5'-phospho-(deoxyribonucleotide)m = (deoxyribonucleotide)n+m + AMP + beta-nicotinamide D-nucleotide.. Functionally, DNA ligase that catalyzes the formation of phosphodiester linkages between 5'-phosphoryl and 3'-hydroxyl groups in double-stranded DNA using NAD as a coenzyme and as the energy source for the reaction. It is essential for DNA replication and repair of damaged DNA. This chain is DNA ligase, found in Thermus scotoductus.